A 250-amino-acid chain; its full sequence is Exosome complex component Rrp41 (250 aa).

The protein belongs to the RNase PH family. Rrp41 subfamily. Component of the archaeal exosome complex. Forms a hexameric ring-like arrangement composed of 3 Rrp41-Rrp42 heterodimers. The hexameric ring associates with a trimer of Rrp4 and/or Csl4 subunits.

It is found in the cytoplasm. In terms of biological role, catalytic component of the exosome, which is a complex involved in RNA degradation. Has 3'-&gt;5' exoribonuclease activity. Can also synthesize heteromeric RNA-tails. This chain is Exosome complex component Rrp41, found in Pyrococcus furiosus (strain ATCC 43587 / DSM 3638 / JCM 8422 / Vc1).